Consider the following 1018-residue polypeptide: Serine/threonine-protein kinase 31 (1018 aa).

Positions 78–137 constitute a Tudor domain; it reads NLDPKKIYGGLFSEDKCWYRCKVLKTISDDKCLVRYIDYGNTEILNRSDIVEIPPELQFS. A coiled-coil region spans residues 298 to 358; it reads AKIKQDQKLI…TKHLESTLKT (61 aa). In terms of domain architecture, Protein kinase spans 711-1018; that stretch reads IGLLKYMNSG…EKTRNGEANP (308 aa). Residues 717 to 725 and Lys-738 each bind ATP; that span reads MNSGGLLTM. The segment at 988-1018 is disordered; sequence IECTQHSREDESKMESLDRYSEKTRNGEANP.

This sequence belongs to the protein kinase superfamily. Ser/Thr protein kinase family. Testis specific. Expressed only in male germ cells.

The catalysed reaction is L-seryl-[protein] + ATP = O-phospho-L-seryl-[protein] + ADP + H(+). It carries out the reaction L-threonyl-[protein] + ATP = O-phospho-L-threonyl-[protein] + ADP + H(+). The chain is Serine/threonine-protein kinase 31 (Stk31) from Mus musculus (Mouse).